The sequence spans 629 residues: Probable alpha-L-arabinofuranosidase A (629 aa).

A signal peptide spans 1–25 (MVALSTLSGLSALPFLFSLVQNVYG). Residues Asn-36, Asn-51, Asn-140, Asn-152, Asn-168, Asn-171, Asn-260, Asn-494, and Asn-534 are each glycosylated (N-linked (GlcNAc...) asparagine).

Belongs to the glycosyl hydrolase 51 family.

It localises to the secreted. The catalysed reaction is Hydrolysis of terminal non-reducing alpha-L-arabinofuranoside residues in alpha-L-arabinosides.. The protein operates within glycan metabolism; L-arabinan degradation. Functionally, alpha-L-arabinofuranosidase involved in the degradation of arabinoxylan, a major component of plant hemicellulose. Acts only on small linear 1,5-alpha-linked L-arabinofuranosyl oligosaccharides. The chain is Probable alpha-L-arabinofuranosidase A (abfA) from Aspergillus oryzae (strain ATCC 42149 / RIB 40) (Yellow koji mold).